We begin with the raw amino-acid sequence, 300 residues long: Glycine--tRNA ligase alpha subunit (300 aa).

It belongs to the class-II aminoacyl-tRNA synthetase family. In terms of assembly, tetramer of two alpha and two beta subunits.

It localises to the cytoplasm. It catalyses the reaction tRNA(Gly) + glycine + ATP = glycyl-tRNA(Gly) + AMP + diphosphate. This Pseudoalteromonas translucida (strain TAC 125) protein is Glycine--tRNA ligase alpha subunit.